Here is a 206-residue protein sequence, read N- to C-terminus: Large ribosomal subunit protein uL4 (206 aa).

The segment at 43–78 (ARSGNRKQKDREEVHHTTKKPWRQKGTGRARAGMSS) is disordered. The segment covering 49-58 (KQKDREEVHH) has biased composition (basic and acidic residues). The span at 59–70 (TTKKPWRQKGTG) shows a compositional bias: basic residues.

This sequence belongs to the universal ribosomal protein uL4 family. Part of the 50S ribosomal subunit.

Its function is as follows. One of the primary rRNA binding proteins, this protein initially binds near the 5'-end of the 23S rRNA. It is important during the early stages of 50S assembly. It makes multiple contacts with different domains of the 23S rRNA in the assembled 50S subunit and ribosome. In terms of biological role, forms part of the polypeptide exit tunnel. The sequence is that of Large ribosomal subunit protein uL4 from Janthinobacterium sp. (strain Marseille) (Minibacterium massiliensis).